We begin with the raw amino-acid sequence, 407 residues long: Phosphonoacetate hydrolase (407 aa).

Asp25, Thr64, Asp202, His206, Asp241, His242, and His368 together coordinate Zn(2+). Substrate contacts are provided by Thr64 and Asp202. Substrate-binding residues include His242 and His368.

It belongs to the alkaline phosphatase family. PhnA subfamily. Homodimer. Zn(2+) is required as a cofactor.

The enzyme catalyses phosphonoacetate + H2O = acetate + phosphate + H(+). Specifically hydrolyzes phosphonoacetate. Does not have activity on other organophosphonates or acetates. This Pseudomonas cedrina protein is Phosphonoacetate hydrolase.